Consider the following 588-residue polypeptide: Juvenile hormone esterase (588 aa).

Positions 1–23 are cleaved as a signal peptide; that stretch reads MKFPKNLFLVLFYTSWKFCDVCA. N-linked (GlcNAc...) asparagine glycans are attached at residues N79 and N83. A disulfide bridge connects residues C91 and C109. The active-site Acyl-ester intermediate is the S214. N-linked (GlcNAc...) asparagine glycosylation is present at N257. An intrachain disulfide couples C268 to C281. E350 functions as the Charge relay system in the catalytic mechanism. Residues N389, N396, and N472 are each glycosylated (N-linked (GlcNAc...) asparagine). H479 (charge relay system) is an active-site residue.

It belongs to the type-B carboxylesterase/lipase family.

It localises to the secreted. The catalysed reaction is juvenile hormone III + H2O = juvenile hormone III carboxylate + methanol + H(+). Its activity is regulated as follows. Inhibited by 3-octylthio-1,1,1-trifluoro-2-propanone (OTFP), a specific inhibitor of juvenile hormone esterase (JHE), but not by diisopropyl fluorophosphate (DFP), a serine enzyme inhibitor. Functionally, may function as a juvenile hormone (JH)-specific degradation enzyme in vivo decreasing JH activity. Hydrolyzes JH III in vitro. Hydrolyzes effectively also methyl hepthylthioacetothioate (HEPTAT), a synthetic substrate. Of the general esterase substrates, it has preference for 2-naphthyl acetate (2-NA) and shows a weak activity for 1-NA and 4-nitrophenylacetate (4-NPA). The chain is Juvenile hormone esterase from Tribolium castaneum (Red flour beetle).